Here is a 481-residue protein sequence, read N- to C-terminus: Tryptophan--tRNA ligase, cytoplasmic (481 aa).

In terms of domain architecture, WHEP-TRS spans 12-68 (SPLELFNSIAAQGELVRSLKAGNAPKDEIESAVKMLLSLKMNYKTAMGEEYKAGCPP). Residues 65 to 85 (GCPPGNSTAGSNGDPDATKAS) form a disordered region. Lys158 carries the post-translational modification N6-succinyllysine. A 'HIGH' region motif is present at residues 168–177 (PSSEAMHLGH). Residues 353 to 357 (KMSAS) carry the 'KMSKS' region motif. Ser355 carries the post-translational modification Phosphoserine.

Belongs to the class-I aminoacyl-tRNA synthetase family. In terms of assembly, homodimer. Interacts with oxidized form of GAPDH. In terms of processing, proteolytic cleavage generates 2 forms; T1-TrpRS and T2-TrpRS.

It is found in the cytoplasm. The catalysed reaction is tRNA(Trp) + L-tryptophan + ATP = L-tryptophyl-tRNA(Trp) + AMP + diphosphate + H(+). Catalyzes the attachment of tryptophan to tRNA(Trp) in a two-step reaction: tryptophan is first activated by ATP to form Trp-AMP and then transferred to the acceptor end of the tRNA(Trp). Could also possess an angiostatic activity. The chain is Tryptophan--tRNA ligase, cytoplasmic from Rattus norvegicus (Rat).